We begin with the raw amino-acid sequence, 361 residues long: Alanine racemase (361 aa).

Catalysis depends on K35, which acts as the Proton acceptor; specific for D-alanine. Residue K35 is modified to N6-(pyridoxal phosphate)lysine. R132 serves as a coordination point for substrate. Y257 (proton acceptor; specific for L-alanine) is an active-site residue. M305 is a substrate binding site.

Belongs to the alanine racemase family. It depends on pyridoxal 5'-phosphate as a cofactor.

The enzyme catalyses L-alanine = D-alanine. Its pathway is amino-acid biosynthesis; D-alanine biosynthesis; D-alanine from L-alanine: step 1/1. In terms of biological role, catalyzes the interconversion of L-alanine and D-alanine. May also act on other amino acids. The protein is Alanine racemase (alr) of Thioalkalivibrio sulfidiphilus (strain HL-EbGR7).